We begin with the raw amino-acid sequence, 183 residues long: MKQRLLFLGPPGAGKGTQAALLCDRHGLRHLSTGDLLRAEVSAGSALGQEAESVMNRGELVSDSLVLAIVKAQLGALNGQGWLLDGFPRNVAQAEALDPLLQELNQPIEAVVLLELDDAVLIERLLSRGRDDDNEAVIRNRLVVYADKTEPLIEHYRQRGLLQSVEAHGSIEAITERIEGVLA.

12 to 17 (GAGKGT) provides a ligand contact to ATP. Residues 32–61 (STGDLLRAEVSAGSALGQEAESVMNRGELV) form an NMP region. AMP is bound by residues T33, R38, 59–61 (ELV), 86–89 (GFPR), and Q93. The interval 127–133 (SRGRDDD) is LID. R128 serves as a coordination point for ATP. Residues R130 and R141 each contribute to the AMP site. An ATP-binding site is contributed by G169.

Belongs to the adenylate kinase family. As to quaternary structure, monomer.

The protein resides in the cytoplasm. The catalysed reaction is AMP + ATP = 2 ADP. The protein operates within purine metabolism; AMP biosynthesis via salvage pathway; AMP from ADP: step 1/1. Functionally, catalyzes the reversible transfer of the terminal phosphate group between ATP and AMP. Plays an important role in cellular energy homeostasis and in adenine nucleotide metabolism. The sequence is that of Adenylate kinase from Synechococcus sp. (strain CC9311).